A 502-amino-acid chain; its full sequence is MYRQAKWDEPLIFELSRPGRVGYTLPKPIEDVDVEIPEKLKRKSPLNLPEVSEPEVVKHYTRLSEMNYGVDSGIYPLGSCTMKYNPKINEELAGHPKVAYIHPYQDERTVQGALRIMWELEQWLKEITGMDRFTLQPAAGANGEFTGVMIIKAYHLDRGETQRNEMLVPDSAHGTNPASAAMAGFKVIEIPSNENGTVDLEALENAVSERTAGLMLTNPNTLGIFEDEIEEIAKIVHKAGGLLYYDGANLNGILGKVRPGDMGFDIVHLNLHKTFSTPHGGGGPGAGPVGVKEFLKDYLPVPLVSYDEENDRYYLDYDVPKSIGKVKELFGNFAVLVRALTYLKVMGKDGLREVSEVAVLNANYLARKLKGTRGYELPHKELRKHEVVFSAEPMKRETGVRTLDVAKRLLDFGMHAPTIYFPLIVHEALMIEPTETVSKEELDAYVEAMKKISEEAYTNPEVVKSAPHNTAVRRVDDVLASKKPIITWKMYKELKEKGEVDY.

Lys-273 bears the N6-(pyridoxal phosphate)lysine mark.

This sequence belongs to the GcvP family. C-terminal subunit subfamily. The glycine cleavage system is composed of four proteins: P, T, L and H. In this organism, the P 'protein' is a heterodimer of two subunits. The cofactor is pyridoxal 5'-phosphate.

The catalysed reaction is N(6)-[(R)-lipoyl]-L-lysyl-[glycine-cleavage complex H protein] + glycine + H(+) = N(6)-[(R)-S(8)-aminomethyldihydrolipoyl]-L-lysyl-[glycine-cleavage complex H protein] + CO2. Its function is as follows. The glycine cleavage system catalyzes the degradation of glycine. The P protein binds the alpha-amino group of glycine through its pyridoxal phosphate cofactor; CO(2) is released and the remaining methylamine moiety is then transferred to the lipoamide cofactor of the H protein. The sequence is that of Probable glycine dehydrogenase (decarboxylating) subunit 2 from Pyrococcus abyssi (strain GE5 / Orsay).